A 628-amino-acid polypeptide reads, in one-letter code: Chaperone protein HtpG (628 aa).

The a; substrate-binding stretch occupies residues 1–337; sequence MSEKKYTFET…SADLPLNVSR (337 aa). A b region spans residues 338–554; it reads EILQHNKVID…DYGMSLHMQK (217 aa). Residues 555 to 628 are c; the sequence is MMEEAGQSFM…FVKLVNKYIR (74 aa).

Belongs to the heat shock protein 90 family. As to quaternary structure, homodimer.

The protein localises to the cytoplasm. Functionally, molecular chaperone. Has ATPase activity. In Francisella tularensis subsp. tularensis (strain WY96-3418), this protein is Chaperone protein HtpG.